The following is a 97-amino-acid chain: Small nuclear ribonucleoprotein Sm D3 (97 aa).

The Sm domain occupies 3–75; the sequence is LCIKLLHETQ…IRFLIVPDML (73 aa).

Belongs to the snRNP core protein family. In terms of assembly, belongs to the 40S cdc5-associated complex (or cwf complex), a spliceosome sub-complex reminiscent of a late-stage spliceosome composed of the U2, U5 and U6 snRNAs and at least brr2, cdc5, cwf2/prp3, cwf3/syf1, cwf4/syf3, cwf5/ecm2, spp42/cwf6, cwf7/spf27, cwf8, cwf9, cwf10, cwf11, cwf12, prp45/cwf13, cwf14, cwf15, cwf16, cwf17, cwf18, cwf19, cwf20, cwf21, cwf22, cwf23, cwf24, cwf25, cwf26, cyp7/cwf27, cwf28, cwf29/ist3, lea1, msl1, prp5/cwf1, prp10, prp12/sap130, prp17, prp22, sap61, sap62, sap114, sap145, slu7, smb1, smd1, smd3, smf1, smg1 and syf2. Interacts with saf5; the interaction is direct.

It is found in the nucleus. The protein localises to the cytoplasm. The protein resides in the cytosol. Its function is as follows. Plays a role in pre-mRNA splicing as a core component of the spliceosomal U1, U2, U4 and U5 small nuclear ribonucleoproteins (snRNPs), the building blocks of the spliceosome. This is Small nuclear ribonucleoprotein Sm D3 (smd3) from Schizosaccharomyces pombe (strain 972 / ATCC 24843) (Fission yeast).